The following is a 1047-amino-acid chain: Ras GTPase-activating protein 1 (1047 aa).

Residue M1 is modified to N-acetylmethionine. The region spanning 181–272 (WYHGKLDRTI…LKGEKLLYPV (92 aa)) is the SH2 1 domain. The SH3 domain occupies 279–341 (EDRRRVRAIL…VEDLVEEVGR (63 aa)). One can recognise an SH2 2 domain in the interval 351–441 (WFHGKISKQE…VEGYYLKEPV (91 aa)). The PH domain maps to 474–577 (NIVKKGYLLK…WMKGLQAFCN (104 aa)). The region spanning 577–690 (NLRKSSPGTS…QKGHATDEWF (114 aa)) is the C2 domain. Y615 is subject to Phosphotyrosine. The Ras-GAP domain maps to 764-974 (KLESLLLCTL…HRMIMFLDEL (211 aa)). At S831 the chain carries Phosphoserine.

As to quaternary structure, interacts with SQSTM1. Interacts with SPSB1; the interaction does not promote degradation. Interacts with CAV2 (tyrosine phosphorylated form). Directly interacts with NCK1. Interacts with PDGFRB (tyrosine phosphorylated). Interacts (via SH2 domain) with the 'Tyr-9' phosphorylated form of PDPK1. Interacts with tyrosine-phosphorylated EPHB4. The N-terminus is blocked. Post-translationally, phosphorylated by SRC and LCK. The phosphorylation SRC inhibits its ability to stimulate the Ras-GTPase activity, whereas phosphorylation by LCK does not display any effect on stimulation activity. In placental villi, detected only in the trophoblast layer (cytotrophoblast and syncytiotrophoblast). Not detected in stromal, endothelial or Hofbauer cells (at protein level).

The protein resides in the cytoplasm. Functionally, inhibitory regulator of the Ras-cyclic AMP pathway. Stimulates the GTPase of normal but not oncogenic Ras p21; this stimulation may be further increased in the presence of NCK1. The protein is Ras GTPase-activating protein 1 (RASA1) of Homo sapiens (Human).